Here is a 642-residue protein sequence, read N- to C-terminus: Tigger transposable element-derived protein 5 (642 aa).

Composition is skewed to pro residues over residues 1–10 (MYPAGPPAGP) and 19–43 (LPGPPAPAPAPVPAARPPPPAPGPR). Positions 1–45 (MYPAGPPAGPVPRRGRRPLPGPPAPAPAPVPAARPPPPAPGPRPR) are disordered. The HTH psq-type domain occupies 47-98 (AVKMAFRKAYSIKDKLQAIERVKGGERQASVCRDFGVPGGTLRGWLKDEPKL). 2 DNA-binding regions (H-T-H motif) span residues 74-94 (QASVCRDFGVPGGTLRGWLKD) and 145-178 (PLIQAQAEAFARQIYGPECTFKASHGWFWRWQKR). An HTH CENPB-type domain is found at 112–185 (QRKKMRLANE…QKRHGISSQR (74 aa)). The tract at residues 185 to 233 (RFYGEAGPPAPSPAPGPPVKEEPALPSGAGPLPDRAPAPPPPAEGGYGD) is disordered. 2 stretches are compositionally biased toward pro residues: residues 192–202 (PPAPSPAPGPP) and 218–227 (DRAPAPPPPA). 2 DDE-1 domains span residues 233–357 (DEQI…VLLV) and 410–477 (RAHI…ERCW). Residues 535–587 (LDDDGGPPEGCREEVGPALPPAAPPAPASLPSAMGGGEDEEEATDYGGTSVPT) are disordered. Residues 552–562 (ALPPAAPPAPA) show a composition bias toward pro residues.

Belongs to the tigger transposable element derived protein family.

Its subcellular location is the nucleus. In Homo sapiens (Human), this protein is Tigger transposable element-derived protein 5 (TIGD5).